Here is a 273-residue protein sequence, read N- to C-terminus: Putative tyrosine-protein phosphatase H16_A0669 (273 aa).

Residues 1-15 (MIKWLQRAGCLSAHA) form the signal peptide. The Phosphocysteine intermediate role is filled by Cys169.

It belongs to the protein-tyrosine phosphatase family.

The catalysed reaction is O-phospho-L-tyrosyl-[protein] + H2O = L-tyrosyl-[protein] + phosphate. The polypeptide is Putative tyrosine-protein phosphatase H16_A0669 (Cupriavidus necator (strain ATCC 17699 / DSM 428 / KCTC 22496 / NCIMB 10442 / H16 / Stanier 337) (Ralstonia eutropha)).